Here is a 464-residue protein sequence, read N- to C-terminus: Elongation factor 1-alpha (464 aa).

One can recognise a tr-type G domain in the interval 5 to 242 (KTHINIVVIG…DSVVPPQRPT (238 aa)). Residues 14–21 (GHVDSGKS), 91–95 (DAPGH), and 153–156 (NKMD) contribute to the GTP site. Glu-301 and Glu-374 each carry 5-glutamyl glycerylphosphorylethanolamine.

This sequence belongs to the TRAFAC class translation factor GTPase superfamily. Classic translation factor GTPase family. EF-Tu/EF-1A subfamily.

Its subcellular location is the cytoplasm. In terms of biological role, this protein promotes the GTP-dependent binding of aminoacyl-tRNA to the A-site of ribosomes during protein biosynthesis. The chain is Elongation factor 1-alpha from Onchocerca volvulus.